Reading from the N-terminus, the 372-residue chain is 2,7-anhydro-N-acetylneuraminate hydratase (372 aa).

NAD(+) contacts are provided by tyrosine 11, phenylalanine 12, aspartate 33, asparagine 36, threonine 68, asparagine 70, histidine 73, glutamate 90, lysine 91, and tryptophan 160.

The protein belongs to the Gfo/Idh/MocA family. Homodimer. The cofactor is NAD(+).

It carries out the reaction N-acetyl-2,7-anhydro-alpha-neuraminate + H2O = N-acetyl-alpha-neuraminate. It catalyses the reaction 2-deoxy-2,3-dehydro-N-acetylneuraminate + H2O = N-acetyl-alpha-neuraminate. With respect to regulation, all conversions require NAD(+) as a cofactor, which is regenerated in the reaction. The presence of EGTA and several divalent cations does not affect the activity. Functionally, hydratase involved in the degradation of sialic acids. Catalyzes the reversible conversion of the dehydrated form of N-acetylneuraminate (Neu5Ac), 2,7-anhydro-N-acetylneuraminate (2,7-AN), to Neu5Ac. Also catalyzes the irreversible conversion of 2-deoxy-2,3-didehydro-N-acetylneuraminate (2,3-EN) to Neu5Ac. The reaction mechanism involves keto intermediates and the transient formation of NADH. The polypeptide is 2,7-anhydro-N-acetylneuraminate hydratase (Escherichia coli (strain K12)).